The following is a 1410-amino-acid chain: DNA-directed RNA polymerase subunit beta' (1410 aa).

Cysteine 70, cysteine 72, cysteine 85, and cysteine 88 together coordinate Zn(2+). Mg(2+) contacts are provided by aspartate 460, aspartate 462, and aspartate 464. Residues cysteine 814, cysteine 888, cysteine 895, and cysteine 898 each coordinate Zn(2+).

The protein belongs to the RNA polymerase beta' chain family. In terms of assembly, the RNAP catalytic core consists of 2 alpha, 1 beta, 1 beta' and 1 omega subunit. When a sigma factor is associated with the core the holoenzyme is formed, which can initiate transcription. Mg(2+) serves as cofactor. The cofactor is Zn(2+).

The enzyme catalyses RNA(n) + a ribonucleoside 5'-triphosphate = RNA(n+1) + diphosphate. Functionally, DNA-dependent RNA polymerase catalyzes the transcription of DNA into RNA using the four ribonucleoside triphosphates as substrates. The chain is DNA-directed RNA polymerase subunit beta' from Buchnera aphidicola subsp. Cinara cedri (strain Cc).